Reading from the N-terminus, the 401-residue chain is Multidrug resistance protein MdtH (401 aa).

Helical transmembrane passes span 13-33 (YFLL…FPLI), 34-54 (SIRF…ALGL), 99-116 (PWIL…GTLF), 139-159 (LLMM…SWLL), 165-185 (FVCW…VWLL), 214-234 (VLTL…LPIV), 243-263 (AAVK…LYPI), 277-297 (LMFG…ITHL), 299-319 (TLFM…PARE), 340-360 (LGLA…YDTG), and 368-388 (LPWF…YWQF).

Belongs to the major facilitator superfamily. DHA1 family. MdtH (TC 2.A.1.2.21) subfamily.

It is found in the cell inner membrane. The protein is Multidrug resistance protein MdtH of Yersinia enterocolitica serotype O:8 / biotype 1B (strain NCTC 13174 / 8081).